A 449-amino-acid polypeptide reads, in one-letter code: tRNA-2-methylthio-N(6)-dimethylallyladenosine synthase (449 aa).

An MTTase N-terminal domain is found at 7–124 (DAFYIHTFGC…LPLLIKQVQQ (118 aa)). [4Fe-4S] cluster is bound by residues Cys-16, Cys-52, Cys-87, Cys-163, Cys-167, and Cys-170. A Radical SAM core domain is found at 149 to 379 (RSSSMSAFVP…IECQNRISAS (231 aa)). A TRAM domain is found at 382–445 (SQAVGSVVEV…SATLLGEPLI (64 aa)).

It belongs to the methylthiotransferase family. MiaB subfamily. Monomer. Requires [4Fe-4S] cluster as cofactor.

The protein localises to the cytoplasm. It carries out the reaction N(6)-dimethylallyladenosine(37) in tRNA + (sulfur carrier)-SH + AH2 + 2 S-adenosyl-L-methionine = 2-methylsulfanyl-N(6)-dimethylallyladenosine(37) in tRNA + (sulfur carrier)-H + 5'-deoxyadenosine + L-methionine + A + S-adenosyl-L-homocysteine + 2 H(+). Its function is as follows. Catalyzes the methylthiolation of N6-(dimethylallyl)adenosine (i(6)A), leading to the formation of 2-methylthio-N6-(dimethylallyl)adenosine (ms(2)i(6)A) at position 37 in tRNAs that read codons beginning with uridine. In Chlorobium chlorochromatii (strain CaD3), this protein is tRNA-2-methylthio-N(6)-dimethylallyladenosine synthase.